Reading from the N-terminus, the 508-residue chain is UBX domain-containing protein 4 (508 aa).

The interaction with UBQLN1 stretch occupies residues 1 to 200; it reads MLWFQGAIPA…PTEDLTVRVE (200 aa). Residues 1–413 lie on the Cytoplasmic side of the membrane; that stretch reads MLWFQGAIPA…VHSSSGDFWT (413 aa). Residues 117-199 form a disordered region; it reads GEASLANGSQ…RPTEDLTVRV (83 aa). Residues 122–190 are compositionally biased toward polar residues; sequence ANGSQSEGSV…QEPSGCSNQR (69 aa). The 79-residue stretch at 315–393 folds into the UBX domain; the sequence is ERSTVARIQF…ELAPSASVVL (79 aa). The stretch at 414-434 is an intramembrane region; sequence LLGTVLYPFLAIWRLISNFLF. At 435–508 the chain is on the cytoplasmic side; that stretch reads SNPPPAQTSV…TWNGNSTQQM (74 aa). Positions 450 to 459 are enriched in polar residues; the sequence is ETSNLASSSN. Residues 450 to 508 are disordered; that stretch reads ETSNLASSSNSEKREPVRKRVLEKRGEDFKKEGKIYRLRTQDDGEDENNTWNGNSTQQM. Residues 460–491 show a composition bias toward basic and acidic residues; sequence SEKREPVRKRVLEKRGEDFKKEGKIYRLRTQD. The residue at position 489 (Thr-489) is a Phosphothreonine. Positions 498–508 are enriched in polar residues; it reads NTWNGNSTQQM.

In terms of assembly, directly interacts with VCP. Interacts with UBQLN1. Forms a complex with VCP and UBQLN1.

It localises to the endoplasmic reticulum membrane. It is found in the nucleus envelope. Functionally, involved in endoplasmic reticulum-associated protein degradation (ERAD). Acts as a platform to recruit both UBQLN1 and VCP to the ER during ERAD. The polypeptide is UBX domain-containing protein 4 (UBXN4) (Bos taurus (Bovine)).